A 91-amino-acid chain; its full sequence is uncharacterized protein (91 aa).

Positions 1–25 (MLLQRIGIEHLRIWILLLLISLVPA) are cleaved as a signal peptide.

This is an uncharacterized protein from Caenorhabditis elegans.